The primary structure comprises 681 residues: MFNKILIANRGEIACRVIKTARKMGISTVAIYSDADKQALHVQMADEAVHIGPPPANQSYIVIDKVMAAIRATGAQAVHPGYGFLSENSKFAEALEAEGVIFVGPPKGAIEAMGDKITSKKIAQEANVSTVPGYMGLIEDADEAVKISNQIGYPVMIKASAGGGGKGMRIAWNDQEAREGFQSSKNEAANSFGDDRIFIEKFVTQPRHIEIQVLCDSHGNGIYLGERECSIQRRNQKVVEEAPSPFLDEATRRAMGEQAVALAKAVGYASAGTVEFIVDGQKNFYFLEMNTRLQVEHPVTELITGVDLVEQMIRVAAGEPLSITQGDVKLTGWAIENRLYAEDPYRGFLPSIGRLTRYRPPAETAAGPLLVNGKWQGDAPSGEAAVRNDTGVYEGGEISMYYDPMIAKLCTWAPTRAAAIEAMRIALDSFEVEGIGHNLPFLSAVMDHPKFISGDMTTAFIAEEYPEGFEGVNLPETDLRRVAAAAAAMHRVAEIRRTRVSGRMDNHERRVGTEWVVTLQGADFPVTIAADHDGSTVSFDDGSSMRVTSDWTPGDQLANLMVDGAPLVLKVGKISGGFRIRTRGADLKVHVRTPRQAELARLMPEKLPPDTSKMLLCPMPGLIVKVDVEVGQEVQEGQALCTIEAMKMENILRAEKKGVVAKINASAGNSLAVDDVIMEFE.

One can recognise a Biotin carboxylation domain in the interval 1 to 466 (MFNKILIANR…TTAFIAEEYP (466 aa)). ATP is bound by residues Lys-116, 148-209 (SNQI…PRHI), Glu-200, and Asn-235. In terms of domain architecture, ATP-grasp spans 120-317 (KKIAQEANVS…LVEQMIRVAA (198 aa)). 3 residues coordinate Mg(2+): Glu-275, Glu-288, and Asn-290. Residues Glu-275, Glu-288, and Asn-290 each contribute to the Mn(2+) site. Glu-288 is an active-site residue. Phe-348 provides a ligand contact to biotin. The 80-residue stretch at 602–681 (LMPEKLPPDT…AVDDVIMEFE (80 aa)) folds into the Biotinyl-binding domain. Lys-647 carries the post-translational modification N6-biotinyllysine.

The holoenzyme is a dodecamer composed of 6 PccA/alpha subunits and 6 PccB/beta subunits. It depends on Mg(2+) as a cofactor. Mn(2+) is required as a cofactor. The cofactor is biotin. The biotin cofactor is covalently attached to the C-terminal biotinyl-binding domain and is required for the catalytic activity.

It catalyses the reaction propanoyl-CoA + hydrogencarbonate + ATP = (S)-methylmalonyl-CoA + ADP + phosphate + H(+). Its pathway is metabolic intermediate metabolism; propanoyl-CoA degradation; succinyl-CoA from propanoyl-CoA: step 1/3. This is one of the 2 subunits of the biotin-dependent propionyl-CoA carboxylase (PCC), the enzyme catalyzing the carboxylation of propionyl-CoA/propanoyl-CoA to D-methylmalonyl-CoA/(S)-methylmalonyl-CoA. Within the holoenzyme, the alpha subunit catalyzes the ATP-dependent carboxylation of the biotin carried by the biotin carboxyl carrier (BCC) domain, while the beta subunit then tranfers the carboxyl group from carboxylated biotin to propionyl-CoA. The protein is Propionyl-CoA carboxylase alpha chain of Ruegeria pomeroyi (strain ATCC 700808 / DSM 15171 / DSS-3) (Silicibacter pomeroyi).